The sequence spans 155 residues: Interleukin-2 (155 aa).

Positions 1–20 (MYKIQLLSCIALTLALVANG) are cleaved as a signal peptide. O-linked (GalNAc...) threonine glycosylation occurs at T23. C79 and C127 form a disulfide bridge.

This sequence belongs to the IL-2 family.

The protein resides in the secreted. In terms of biological role, cytokine produced by activated CD4-positive helper T-cells and to a lesser extend activated CD8-positive T-cells and natural killer (NK) cells that plays pivotal roles in the immune response and tolerance. Binds to a receptor complex composed of either the high-affinity trimeric IL-2R (IL2RA/CD25, IL2RB/CD122 and IL2RG/CD132) or the low-affinity dimeric IL-2R (IL2RB and IL2RG). Interaction with the receptor leads to oligomerization and conformation changes in the IL-2R subunits resulting in downstream signaling starting with phosphorylation of JAK1 and JAK3. In turn, JAK1 and JAK3 phosphorylate the receptor to form a docking site leading to the phosphorylation of several substrates including STAT5. This process leads to activation of several pathways including STAT, phosphoinositide-3-kinase/PI3K and mitogen-activated protein kinase/MAPK pathways. Functions as a T-cell growth factor and can increase NK-cell cytolytic activity as well. Promotes strong proliferation of activated B-cells and subsequently immunoglobulin production. Plays a pivotal role in regulating the adaptive immune system by controlling the survival and proliferation of regulatory T-cells, which are required for the maintenance of immune tolerance. Moreover, participates in the differentiation and homeostasis of effector T-cell subsets, including Th1, Th2, Th17 as well as memory CD8-positive T-cells. The polypeptide is Interleukin-2 (IL2) (Bubalus bubalis (Domestic water buffalo)).